The chain runs to 824 residues: Disintegrin and metalloproteinase domain-containing protein 17 (824 aa).

The signal sequence occupies residues 1–17 (MRQSLLFLTSVVPFVLA). A propeptide spanning residues 18 to 214 (PRPPDDPGFG…PEELVHRVKR (197 aa)) is cleaved from the precursor. N-linked (GlcNAc...) asparagine glycans are attached at residues asparagine 103, asparagine 157, and asparagine 174. Positions 182-189 (KVCGYLKV) match the Cysteine switch motif. Residue cysteine 184 participates in Zn(2+) binding. Residues 215 to 671 (RADPDPMKNT…NTFGKFLADN (457 aa)) lie on the Extracellular side of the membrane. One can recognise a Peptidase M12B domain in the interval 223-474 (NTCKLLVVAD…KAQECFQERS (252 aa)). 3 disulfide bridges follow: cysteine 225/cysteine 333, cysteine 365/cysteine 469, and cysteine 423/cysteine 453. The N-linked (GlcNAc...) asparagine glycan is linked to asparagine 264. Histidine 405 lines the Zn(2+) pocket. Glutamate 406 is a catalytic residue. Zn(2+) contacts are provided by histidine 409 and histidine 415. N-linked (GlcNAc...) asparagine glycosylation is found at asparagine 452, asparagine 498, asparagine 539, and asparagine 551. The region spanning 475–563 (NKVCGNSRVD…ECPPPGNAED (89 aa)) is the Disintegrin domain. 4 disulfides stabilise this stretch: cysteine 534–cysteine 555, cysteine 573–cysteine 582, cysteine 578–cysteine 591, and cysteine 593–cysteine 600. N-linked (GlcNAc...) asparagine glycosylation occurs at asparagine 594. Residues 603 to 671 (CCRDLSGRCV…NTFGKFLADN (69 aa)) form a crambin-like region. The helical transmembrane segment at 672–692 (IVGSVLVFSLIFWIPFSILVH) threads the bilayer. Residues 693–824 (CVDKKLDKQY…NRVDSKETEC (132 aa)) are Cytoplasmic-facing. 2 short sequence motifs (SH3-binding) span residues 731 to 738 (PAPQTPGR) and 741 to 748 (PAPVIPSA). The disordered stretch occupies residues 732 to 824 (APQTPGRLQP…NRVDSKETEC (93 aa)). Residue threonine 735 is modified to Phosphothreonine; by MAPK14. Over residues 741–752 (PAPVIPSAPAAP) the composition is skewed to low complexity. The residue at position 761 (threonine 761) is a Phosphothreonine. Residue serine 767 is modified to Phosphoserine. 3 stretches are compositionally biased toward basic and acidic residues: residues 768-781 (TDSHMDEDGFEKDP), 791-807 (SFEDLTDHPVTRSEKAA), and 815-824 (NRVDSKETEC). 2 positions are modified to phosphoserine: serine 791 and serine 819.

Interacts with MAD2L1, MAPK14 and MUC1. Interacts with iRhom1/RHBDF1 and iRhom2/RHBDF2. Interacts with FRMD8 via its interaction with iRhom1/RHBDF1 and iRhom2/RHBDF2. Interacts with TSPAN8. Zn(2+) serves as cofactor. In terms of processing, the precursor is cleaved by a furin endopeptidase. Phosphorylated. Stimulation by growth factor or phorbol 12-myristate 13-acetate induces phosphorylation of Ser-819 but decreases phosphorylation of Ser-791. Phosphorylation at Thr-735 by MAPK14 is required for ADAM17-mediated ectodomain shedding. As to expression, ubiquitously expressed. Expressed at highest levels in adult heart, placenta, skeletal muscle, pancreas, spleen, thymus, prostate, testes, ovary and small intestine, and in fetal brain, lung, liver and kidney. Expressed in natural killer cells (at protein level).

It is found in the cell membrane. The catalysed reaction is Narrow endopeptidase specificity. Cleaves Pro-Leu-Ala-Gln-Ala-|-Val-Arg-Ser-Ser-Ser in the membrane-bound, 26-kDa form of tumor necrosis factor alpha (TNFalpha). Similarly cleaves other membrane-anchored, cell-surface proteins to 'shed' the extracellular domains.. Functionally, transmembrane metalloprotease which mediates the ectodomain shedding of a myriad of transmembrane proteins including adhesion proteins, growth factor precursors and cytokines important for inflammation and immunity. Cleaves the membrane-bound precursor of TNF-alpha to its mature soluble form. Responsible for the proteolytical release of soluble JAM3 from endothelial cells surface. Responsible for the proteolytic release of several other cell-surface proteins, including p75 TNF-receptor, interleukin 1 receptor type II, p55 TNF-receptor, transforming growth factor-alpha, L-selectin, growth hormone receptor, MUC1 and the amyloid precursor protein. Acts as an activator of Notch pathway by mediating cleavage of Notch, generating the membrane-associated intermediate fragment called Notch extracellular truncation (NEXT). Plays a role in the proteolytic processing of ACE2. Plays a role in hemostasis through shedding of GP1BA, the platelet glycoprotein Ib alpha chain. Mediates the proteolytic cleavage of LAG3, leading to release the secreted form of LAG3. Mediates the proteolytic cleavage of IL6R, leading to the release of secreted form of IL6R. Mediates the proteolytic cleavage and shedding of FCGR3A upon NK cell stimulation, a mechanism that allows for increased NK cell motility and detachment from opsonized target cells. Cleaves TREM2, resulting in shedding of the TREM2 ectodomain. This Homo sapiens (Human) protein is Disintegrin and metalloproteinase domain-containing protein 17.